The chain runs to 509 residues: Putative thymidine phosphorylase (509 aa).

It belongs to the thymidine/pyrimidine-nucleoside phosphorylase family. Type 2 subfamily.

It carries out the reaction thymidine + phosphate = 2-deoxy-alpha-D-ribose 1-phosphate + thymine. In Chelativorans sp. (strain BNC1), this protein is Putative thymidine phosphorylase.